A 689-amino-acid chain; its full sequence is MADLEAVLADVSYLMAMEKSKATPAARASKKILLPEPSIRSVMQKYLEDRGEVTFEKIFSQKLGYLLFRDFCLNHLEEARPLVEFYEEIKKYEKLETEEERVARSREIFDSYIMKELLACSHPFSKSATEHVQGHLGKKQVPPDLFQPYIEEICQNLRGDVFQKFIESDKFTRFCQWKNVELNIHLTMNDFSVHRIIGRGGFGEVYGCRKADTGKMYAMKCLDKKRIKMKQGETLALNERIMLSLVSTGDCPFIVCMSYAFHTPDKLSFILDLMNGGDLHYHLSQHGVFSEADMRFYAAEIILGLEHMHNRFVVYRDLKPANILLDEHGHVRISDLGLACDFSKKKPHASVGTHGYMAPEVLQKGVAYDSSADWFSLGCMLFKLLRGHSPFRQHKTKDKHEIDRMTLTMAVELPDSFSPELRSLLEGLLQRDVNRRLGCLGRGAQEVKESPFFRSLDWQMVFLQKYPPPLIPPRGEVNAADAFDIGSFDEEDTKGIKLLDSDQELYRNFPLTISERWQQEVAETVFDTINAETDRLEARKKAKNKQLGHEEDYALGKDCIMHGYMSKMGNPFLTQWQRRYFYLFPNRLEWRGEGEAPQSLLTMEEIQSVEETQIKERKCLLLKIRGGKQFILQCDSDPELVQWKKELRDAYREAQQLVQRVPKMKNKPRSPVVELSKVPLVQRGSANGL.

The N-terminal stretch occupies residues 1-190 (MADLEAVLAD…ELNIHLTMND (190 aa)). Residues 54 to 175 (TFEKIFSQKL…IESDKFTRFC (122 aa)) enclose the RGS domain. Residues 191-453 (FSVHRIIGRG…AQEVKESPFF (263 aa)) enclose the Protein kinase domain. ATP-binding positions include 197–205 (IGRGGFGEV) and Lys-220. The Proton acceptor role is filled by Asp-317. The AGC-kinase C-terminal domain occupies 454–521 (RSLDWQMVFL…TISERWQQEV (68 aa)). Residues 558 to 652 (DCIMHGYMSK…WKKELRDAYR (95 aa)) enclose the PH domain. At Ser-670 the chain carries Phosphoserine.

This sequence belongs to the protein kinase superfamily. AGC Ser/Thr protein kinase family. GPRK subfamily. In terms of assembly, interacts with the heterodimer formed by GNB1 and GNG2. Interacts with GIT1. Interacts with, and phosphorylates chemokine-stimulated CCR5. Interacts with ARRB1. Interacts with LPAR1 and LPAR2. Interacts with RALA in response to LPAR1 activation. ADRBK1 and RALA mutually inhibit each other's binding to LPAR1. Interacts with ADRB2. Expressed in peripheral blood leukocytes.

The protein localises to the cytoplasm. It localises to the cell membrane. It is found in the postsynapse. Its subcellular location is the presynapse. The catalysed reaction is [beta-adrenergic receptor] + ATP = [beta-adrenergic receptor]-phosphate + ADP + H(+). With respect to regulation, in contrast to other AGC family kinases, the catalytic activity is solely regulated by the binding of substrates and ligands, not by phosphorylation of the kinase domain. Functionally, specifically phosphorylates the agonist-occupied form of the beta-adrenergic and closely related receptors, probably inducing a desensitization of them. Key regulator of LPAR1 signaling. Competes with RALA for binding to LPAR1 thus affecting the signaling properties of the receptor. Desensitizes LPAR1 and LPAR2 in a phosphorylation-independent manner. Positively regulates ciliary smoothened (SMO)-dependent Hedgehog (Hh) signaling pathway by facilitating the trafficking of SMO into the cilium and the stimulation of SMO activity. Inhibits relaxation of airway smooth muscle in response to blue light. The protein is Beta-adrenergic receptor kinase 1 of Homo sapiens (Human).